The following is a 309-amino-acid chain: Methyltransferase AacuQ (309 aa).

Positions 57-149 (DVGAGNGPYA…QLRPGGTFAC (93 aa)) are methyltransferase domain.

It belongs to the methyltransferase superfamily.

It functions in the pathway secondary metabolite biosynthesis. Functionally, methyltransferase; part of the gene cluster that mediates the biosynthesis of the tetrahydroxanthone dimer secalonic acid D. The pathway begins with the synthesis of atrochrysone thioester by the polyketide synthase AacuL. The atrochrysone carboxyl ACP thioesterase AacuM then breaks the thioester bond and releases the atrochrysone carboxylic acid from AacuL. Atrochrysone carboxylic acid is decarboxylated by the decarboxylase AacuI, and oxidized by the anthrone oxygenase AacuG to yield emodin. Emodin is then reduced to emodin hydroquinone by a yet unidentified oxidoreductase. A-ring reduction by the short chain dehydrogenase AacuN, dehydration by the scytalone dehydratase-like protein AacuK and probable spontaneous re-oxidation, results in overall deoxygenation to chrysophanol. Baeyer-Villiger oxidation by the Baeyer-Villiger monooxygenase (BVMO) AacuH then yields monodictyphenone. Monodictyphenone is transformed into compounds with the tetrahydroxanthone skeleton via methylesterification by the methyltransferase AacuQ, followed by the action of the flavin-dependent monooxygenase AacuC, the isomerase AacuP, and the short chain dehydrogenase/reductase AacuF or AacuD. AacuF and AacuD should accept the same compound as a substrate but perform the ketoreduction with a different stereoselectivity, thus yielding blennolides B and A, respectively. In the final step of the biosynthesis, the cytochrome P450 monooxygenase AacuE accepts blennolide B and/or blennolide A to conduct the dimerization reaction to furnish the tetrahydroxanthone dimers, secalonic acids D, B, and F. The protein is Methyltransferase AacuQ of Aspergillus aculeatus (strain ATCC 16872 / CBS 172.66 / WB 5094).